A 328-amino-acid polypeptide reads, in one-letter code: Sphingolipid delta(4)-desaturase DES1-like (328 aa).

Transmembrane regions (helical) follow at residues 50-70 (PLAF…ATLL), 78-98 (ILTV…LAIH), and 114-134 (WLGI…FQKY). Residues 98–102 (HELSH) carry the Histidine box-1 motif. A Histidine box-2 motif is present at residues 135–139 (HLEHH). Transmembrane regions (helical) follow at residues 164-184 (LSKS…PLFL), 192-212 (WEFT…YFFG), and 217-237 (AYLI…GHFI). Positions 266–270 (HNEHH) match the Histidine box-3 motif.

Belongs to the fatty acid desaturase type 1 family. DEGS subfamily.

It is found in the endoplasmic reticulum membrane. It carries out the reaction an N-acylsphinganine + 2 Fe(II)-[cytochrome b5] + O2 + 2 H(+) = an N-acylsphing-4-enine + 2 Fe(III)-[cytochrome b5] + 2 H2O. Sphingolipid-delta-4-desaturase required for the biosynthesis of delta-4-unsaturated sphingolipids and derivatives. This is Sphingolipid delta(4)-desaturase DES1-like from Oryza sativa subsp. japonica (Rice).